We begin with the raw amino-acid sequence, 370 residues long: Conserved virulence factor C (370 aa).

This sequence belongs to the CvfC family.

This Staphylococcus haemolyticus (strain JCSC1435) protein is Conserved virulence factor C (cvfC).